The chain runs to 147 residues: TRAP-T-associated universal stress protein TeaD (147 aa).

ATP is bound by residues 8–10 (PVD), valine 38, 117–122 (GAQGTN), and 131–133 (SVA).

This sequence belongs to the universal stress protein A family. As to quaternary structure, homodimer or homotetramer; in equilibrium. The dimer/tetramer ratio is ATP-dependent. ATP stabilizes dimer-dimer complexes, with one ATP molecule bound to each monomer.

Its subcellular location is the cytoplasm. ATP-binding protein that negatively regulates activity of the tripartite ATP-independent periplasmic (TRAP) ectoine transport system TeaABC. May regulate uptake according to the ATP status of the cell. This is TRAP-T-associated universal stress protein TeaD (teaD) from Halomonas elongata (strain ATCC 33173 / DSM 2581 / NBRC 15536 / NCIMB 2198 / 1H9).